The following is a 109-amino-acid chain: MSAQPVDIQIFGRSLRVNCPPEQQDALNMAAEDLNQRLQDLKVRTRVTNTEQLVFIAALNVCHELAQERLKTRDYASNMEQRIRMLQQTIEQALLEQGRISERQDAQFE.

Residues 22–99 (EQQDALNMAA…IEQALLEQGR (78 aa)) are a coiled coil.

This sequence belongs to the ZapA family. Type 1 subfamily. As to quaternary structure, homodimer. Interacts with FtsZ.

The protein localises to the cytoplasm. Functionally, activator of cell division through the inhibition of FtsZ GTPase activity, therefore promoting FtsZ assembly into bundles of protofilaments necessary for the formation of the division Z ring. It is recruited early at mid-cell but it is not essential for cell division. The chain is Cell division protein ZapA from Yersinia enterocolitica serotype O:8 / biotype 1B (strain NCTC 13174 / 8081).